The sequence spans 152 residues: Large ribosomal subunit protein bL21 (152 aa).

The segment at 115–152 (VTSISNGEKPKKATTSAKPNTKKPSTAVKSSKVEKTPE) is disordered. Residues 127–143 (ATTSAKPNTKKPSTAVK) show a composition bias toward polar residues.

The protein belongs to the bacterial ribosomal protein bL21 family. In terms of assembly, part of the 50S ribosomal subunit. Contacts protein L20.

Its function is as follows. This protein binds to 23S rRNA in the presence of protein L20. This is Large ribosomal subunit protein bL21 from Prochlorococcus marinus (strain SARG / CCMP1375 / SS120).